A 1406-amino-acid polypeptide reads, in one-letter code: DNA-directed RNA polymerase subunit beta' (1406 aa).

4 residues coordinate Zn(2+): C70, C72, C85, and C88. Residues D460, D462, and D464 each contribute to the Mg(2+) site. Zn(2+) contacts are provided by C814, C889, C896, and C899.

Belongs to the RNA polymerase beta' chain family. In terms of assembly, the RNAP catalytic core consists of 2 alpha, 1 beta, 1 beta' and 1 omega subunit. When a sigma factor is associated with the core the holoenzyme is formed, which can initiate transcription. Mg(2+) is required as a cofactor. Requires Zn(2+) as cofactor.

It catalyses the reaction RNA(n) + a ribonucleoside 5'-triphosphate = RNA(n+1) + diphosphate. Its function is as follows. DNA-dependent RNA polymerase catalyzes the transcription of DNA into RNA using the four ribonucleoside triphosphates as substrates. This chain is DNA-directed RNA polymerase subunit beta', found in Stenotrophomonas maltophilia (strain K279a).